A 289-amino-acid chain; its full sequence is MALVPGRSKEDGLWTRNSPGSSQHPESPRLPNPLWDRGKIGKVEGHQHIQVSTSSACVWQLAYPPVWPNLPAVPIQDFSQKSHLPSIVVESSEVNEESGDLHLPHEELLLLTDGEEEDAEAFFQDQSEEPGWAWSPQDPRSPLRTFNAGLSWGQDQDEEDACWILEDTACLEATNHCPFWDSTGSRVCRSGFVEYSHLLPPNSFEGAEEEAVQTPAGVESGAASEAPGGRGCDRPRADHAAPPQEAGVQCTCQHYTVREEAQKTPPADPACPEREDSHGSGSPFKASQD.

2 disordered regions span residues 1–36 (MALV…PLWD) and 205–289 (EGAE…ASQD). One can recognise an LBH domain in the interval 1–128 (MALVPGRSKE…AEAFFQDQSE (128 aa)). Positions 15-25 (TRNSPGSSQHP) are enriched in polar residues.

As to expression, expressed in bladder cancer tissues (at protein level).

The sequence is that of LBH domain-containing protein 1 from Homo sapiens (Human).